We begin with the raw amino-acid sequence, 429 residues long: Glycine betaine monooxygenase oxygenase subunit (429 aa).

Residues 56-163 enclose the Rieske domain; it reads WLIAGMTCEI…VKTAGGYIFI (108 aa). The [2Fe-2S] cluster site is built by Cys98, His100, Cys118, and His121. Fe cation is bound by residues His217 and His222.

It belongs to the bacterial ring-hydroxylating dioxygenase alpha subunit family. As to quaternary structure, the system is composed of an oxygenase subunit (GbcA) and a reductase subunit (GbcB). Requires [2Fe-2S] cluster as cofactor. The cofactor is Fe cation.

The catalysed reaction is glycine betaine + NADH + O2 + H(+) = N,N-dimethylglycine + formaldehyde + NAD(+) + H2O. Functionally, involved in degradation of glycine betaine. Part of a Rieske-type oxygenase system that catalyzes the conversion of glycine betaine (GB) to dimethylglycine (DMG). This subunit is the terminal oxygenase component of the system. Required for growth on choline and GB, but not for growth on DMG. The polypeptide is Glycine betaine monooxygenase oxygenase subunit (Pseudomonas aeruginosa (strain ATCC 15692 / DSM 22644 / CIP 104116 / JCM 14847 / LMG 12228 / 1C / PRS 101 / PAO1)).